The chain runs to 337 residues: Histidine N-acetyltransferase (337 aa).

Residues 1-2 constitute a propeptide, removed in mature form; the sequence is MK. The N-acetyltransferase domain occupies 21 to 156; the sequence is LQFAVATEED…QGILLVRFRA (136 aa).

The enzyme catalyses L-histidine + acetyl-CoA = N(alpha)-acetyl-L-histidine + CoA + H(+). Enzyme responsible for the N-acetyl-histidine (NAH) synthesis, which is a major constituent of brain and lens of ectothermic vertebrates. The polypeptide is Histidine N-acetyltransferase (hisat) (Scomber australasicus (Blue mackerel)).